A 237-amino-acid polypeptide reads, in one-letter code: MRPSGRKLDQMRSVSIEPNVMKHAEGSCLIRMGETHVLCSASIEDKPPPFLKNTGLGWVTAEYGMLPRATTSRNRREAAAGKQSGRTQEIQRLIGRALRAGVDRSALGERQIVIDCDVLQADGGTRCASITGGWVALRLAVNKLLKAGIIVSDPIVDHVAAVSCGIYAGQPVLDLDYAEDSTAGTDGNFVLTGRSRMIEVQMSAEGASFSRDEMGQLLDLAEAGIAELVAAQKAALG.

Phosphate contacts are provided by residues Arg-86 and 124–126 (GTR).

Belongs to the RNase PH family. In terms of assembly, homohexameric ring arranged as a trimer of dimers.

The catalysed reaction is tRNA(n+1) + phosphate = tRNA(n) + a ribonucleoside 5'-diphosphate. Phosphorolytic 3'-5' exoribonuclease that plays an important role in tRNA 3'-end maturation. Removes nucleotide residues following the 3'-CCA terminus of tRNAs; can also add nucleotides to the ends of RNA molecules by using nucleoside diphosphates as substrates, but this may not be physiologically important. Probably plays a role in initiation of 16S rRNA degradation (leading to ribosome degradation) during starvation. This is Ribonuclease PH from Cereibacter sphaeroides (strain ATCC 17029 / ATH 2.4.9) (Rhodobacter sphaeroides).